Reading from the N-terminus, the 538-residue chain is Atos homolog protein B (538 aa).

Residues 1–18 (MRHVQAEPSPSSEPEAGP) are compositionally biased toward low complexity. 2 disordered regions span residues 1-114 (MRHV…LGVA) and 133-300 (TSSW…VLDP). Residues 227 to 238 (HTPPGPGPPGPC) show a composition bias toward pro residues. Phosphoserine is present on residues Ser-254 and Ser-255. The interval 348–430 (LLGNFEESLL…VPKVGTVQVT (83 aa)) is required for macropage invasion. The interval 436 to 444 (QTVVKMFLV) is transactivation domain 1 (TAD1).

The protein belongs to the ATOS family.

It is found in the nucleus. Transcription regulator that may syncronize transcriptional and translational programs. This chain is Atos homolog protein B, found in Homo sapiens (Human).